Here is a 463-residue protein sequence, read N- to C-terminus: Aromatic amino acid transport protein AroP (463 aa).

A run of 12 helical transmembrane segments spans residues 18–38 (TMMG…GVGI), 40–60 (AAGP…VLVM), 84–104 (FGHW…IMVM), 117–137 (AWFG…FAVV), 157–177 (VAVI…WLPG), 200–220 (VAAG…VTIA), 237–257 (AVIW…TFLM), 276–296 (ILAM…IVLA), 337–357 (AVLL…WNPA), 358–378 (GLLD…WAMI), 402–422 (AHPW…ALML), and 431–451 (VYSV…TVNS).

This sequence belongs to the amino acid-polyamine-organocation (APC) superfamily. Amino acid transporter (AAT) (TC 2.A.3.1) family.

It localises to the cell membrane. The enzyme catalyses L-phenylalanine(in) + H(+)(in) = L-phenylalanine(out) + H(+)(out). The catalysed reaction is L-tryptophan(in) + H(+)(in) = L-tryptophan(out) + H(+)(out). It catalyses the reaction L-tyrosine(in) + H(+)(in) = L-tyrosine(out) + H(+)(out). Functionally, permease that is involved in the active transport across the cytoplasmic membrane of all three aromatic amino acids, phenylalanine, tyrosine and tryptophan. The protein is Aromatic amino acid transport protein AroP of Corynebacterium glutamicum (strain ATCC 13032 / DSM 20300 / JCM 1318 / BCRC 11384 / CCUG 27702 / LMG 3730 / NBRC 12168 / NCIMB 10025 / NRRL B-2784 / 534).